We begin with the raw amino-acid sequence, 78 residues long: uncharacterized protein (78 aa).

Positions 1–45 are cleaved as a signal peptide; that stretch reads MPVIAIIAIVIIVIILNKTGVSDSLTALTLATVAALLTGGGAAGA.

To E.coli YkfL.

This is an uncharacterized protein from Escherichia coli (strain K12).